A 241-amino-acid chain; its full sequence is MSMLFYTLITAFLIGIQAEPHSESNVPAGHTIPQAHWTKLQHSLDTALRRARSTPAAAIAARVAGQTCNITVDPRLFKKRRLRSPRVLFSTQPPPEAADTQDLDFEVGGAAPFNRTHRSKRSSSHPIFHRGEFSVCDSVSVWVGDKTTATDIKGKEVMVLGEVNINNSVFKQYFFETKCRDPNPVDSGCRGIDSKHWNSYCTTTHTFVKALTMDGKQAAWRFIRIDTACVCVLSRKAVRRA.

A signal peptide spans 1–18; that stretch reads MSMLFYTLITAFLIGIQA. Residues 19-121 constitute a propeptide that is removed on maturation; sequence EPHSESNVPA…PFNRTHRSKR (103 aa). Residues N69, N114, and N166 are each glycosylated (N-linked (GlcNAc...) asparagine). Disulfide bonds link C136-C201, C179-C229, and C189-C231.

This sequence belongs to the NGF-beta family. Homodimer. The homodimer interacts with a single NTRK1 chain. The homodimer interacts with a single NGFR chain. The NGF dimer interacts with a single SORCS2 chain (via extracellular domain). The NGF precursor (proNGF) binds to a receptor complex formed by SORT1 and NGFR, which leads to NGF endocytosis. Both mature NGF and the immature NGF precursor (proNGF) interact with SORCS2 and with the heterodimer formed by SORCS2 and NGFR (via extracellular domains). The NGF precursor (proNGF) has much higher affinity for SORCS2 than mature NGF. The NGF precursor (proNGF) has much higher affinity for SORT1 than mature NGF. Interacts with ADAM10 in a divalent cation-dependent manner. Interacts with SORCS3.

The protein localises to the secreted. It is found in the endosome lumen. Its function is as follows. Nerve growth factor is important for the development and maintenance of the sympathetic and sensory nervous systems. Extracellular ligand for the NTRK1 and NGFR receptors, activates cellular signaling cascades through those receptor tyrosine kinase to regulate neuronal proliferation, differentiation and survival. Inhibits metalloproteinase dependent proteolysis of platelet glycoprotein VI. This is Beta-nerve growth factor (NGF) from Pongo pygmaeus (Bornean orangutan).